A 1377-amino-acid polypeptide reads, in one-letter code: DNA-directed RNA polymerase subunit beta' (1377 aa).

C60, C62, C75, and C78 together coordinate Zn(2+). Mg(2+) contacts are provided by D449, D451, and D453. C777, C851, C858, and C861 together coordinate Zn(2+).

The protein belongs to the RNA polymerase beta' chain family. As to quaternary structure, the RNAP catalytic core consists of 2 alpha, 1 beta, 1 beta' and 1 omega subunit. When a sigma factor is associated with the core the holoenzyme is formed, which can initiate transcription. It depends on Mg(2+) as a cofactor. Zn(2+) serves as cofactor.

It catalyses the reaction RNA(n) + a ribonucleoside 5'-triphosphate = RNA(n+1) + diphosphate. Functionally, DNA-dependent RNA polymerase catalyzes the transcription of DNA into RNA using the four ribonucleoside triphosphates as substrates. The chain is DNA-directed RNA polymerase subunit beta' from Borrelia turicatae (strain 91E135).